Reading from the N-terminus, the 358-residue chain is DNA integrity scanning protein DisA (358 aa).

Positions 9 to 147 (KQDLSEILQF…ENMKYILKDI (139 aa)) constitute a DAC domain. Residues Gly-76, Leu-94, and 107–111 (MRHRT) each bind ATP.

Belongs to the DisA family. As to quaternary structure, homooctamer. Mg(2+) is required as a cofactor.

It catalyses the reaction 2 ATP = 3',3'-c-di-AMP + 2 diphosphate. Participates in a DNA-damage check-point that is active prior to asymmetric division when DNA is damaged. DisA forms globular foci that rapidly scan along the chromosomes during sporulation, searching for lesions. When a lesion is present, DisA pauses at the lesion site. This triggers a cellular response that culminates in a temporary block in sporulation initiation. Its function is as follows. Also has diadenylate cyclase activity, catalyzing the condensation of 2 ATP molecules into cyclic di-AMP (c-di-AMP). c-di-AMP acts as a signaling molecule that couples DNA integrity with progression of sporulation. The rise in c-di-AMP level generated by DisA while scanning the chromosome, operates as a positive signal that advances sporulation; upon encountering a lesion, the DisA focus arrests at the damaged site and halts c-di-AMP synthesis. The sequence is that of DNA integrity scanning protein DisA from Bacillus licheniformis (strain ATCC 14580 / DSM 13 / JCM 2505 / CCUG 7422 / NBRC 12200 / NCIMB 9375 / NCTC 10341 / NRRL NRS-1264 / Gibson 46).